A 618-amino-acid chain; its full sequence is MSASNKGGYKTPRKENLMSIENLTNSEEESEDLNTAMVGNAVESQPKVTSRRSTRRPSPTKKYQAYQKESNGKGQEERIVVNYVEMSDERSSDAEDQEEEESIEESENAARPAAKDLHLIQSEYNVAGTSMFGFNTPKKRDAMALAALNATPCTPKTPKTPRLGVKTPDTKRKKSMDQPKTPAHVRTRVKKQIAKIVADSDEDFSGDESDFRPSDEESSSSSSSSDAGNSSDNDAADDEPKTPSRARRAIVVPVLPKTPSAARLRQSARAKKSNEFVPESDGYFHSHASSKILTSDHTLDRLKNPRLAADRVFSLLSEIKTSAEHEGSINAIMEEYRSYFPKWMCILNEGFNILLYGLGSKHQLLQSFHREVLHKQTVLVVNGFFPSLTIKDMLDSITSDILDAGISPANPHEAVDMIEEEFALIPETHLFLIVHNLDGAMLRNVKAQAILSRLARIPNIHLLASIDHINTPLLWDQGKLCSFNFSWWDCTTMLPYTNETAFENSLLVQNSGELALSSMRSVFSSLTTNSRGIYMLIVKYQLKNKGNATYQGMPFRDLYSSCREAFLVSSDLALRAQLTEFLDHKLVKSKRSVDGSEQLTIPIDGALLQQFLEEQEKK.

2 disordered regions span residues 1 to 116 and 149 to 274; these read MSAS…AAKD and NATP…KKSN. Phosphothreonine is present on T24. A phosphoserine mark is found at S26 and S30. A compositionally biased stretch (basic residues) spans 49-59; it reads TSRRSTRRPSP. Positions 70-79 are enriched in basic and acidic residues; sequence SNGKGQEERI. A phosphoserine mark is found at S87, S91, and S92. A compositionally biased stretch (acidic residues) spans 94-107; it reads AEDQEEEESIEESE. Residues T151, T154, T157, T160, T167, T170, and T181 each carry the phosphothreonine modification. Over residues 151–161 the composition is skewed to low complexity; it reads TPCTPKTPKTP. The span at 183–193 shows a compositional bias: basic residues; sequence AHVRTRVKKQI. Acidic residues predominate over residues 199–208; it reads DSDEDFSGDE. The segment covering 219–233 has biased composition (low complexity); the sequence is SSSSSSSDAGNSSDN. T258 carries the phosphothreonine modification. A Phosphoserine modification is found at S260.

It belongs to the ORC2 family. As to quaternary structure, ORC is composed of six subunits. Interacts with Mcm10. Interacts with CG9890. Interaction between the TREX-2/AMEX complex and the ORC complex is required for ORC localization to mRNPs, and consequently mRNA export.

Its subcellular location is the nucleus. It localises to the chromosome. The protein localises to the centromere. In terms of biological role, component of the origin recognition complex (ORC) that binds origins of replication. DNA-binding is ATP-dependent, however specific DNA sequences that define origins of replication have not been identified so far. ORC is required to assemble the pre-replication complex necessary to initiate DNA replication. As part of the ORC complex, might also have a role in mRNA export. The protein is Origin recognition complex subunit 2 (Orc2) of Drosophila melanogaster (Fruit fly).